Consider the following 134-residue polypeptide: Gastrin-releasing peptide (134 aa).

Positions 1–23 are cleaved as a signal peptide; sequence MRSREVSLVLLALVLCPAPRGSA. Methionine 50 is modified (methionine amide). Residues 54-134 constitute a propeptide that is removed on maturation; the sequence is SVAESPQLRE…QREGGNPQLY (81 aa). The interval 98–134 is disordered; that stretch reads PPRWEPLSIHQPAWDSKDVSNFKDSGSQREGGNPQLY. Over residues 119–134 the composition is skewed to polar residues; the sequence is FKDSGSQREGGNPQLY.

Belongs to the bombesin/neuromedin-B/ranatensin family.

It localises to the secreted. The protein resides in the cytoplasmic vesicle. The protein localises to the secretory vesicle lumen. Its subcellular location is the cell projection. It is found in the neuron projection. Its function is as follows. Stimulates the release of gastrin and other gastrointestinal hormones. Contributes to the perception of prurient stimuli and to the transmission of itch signals in the spinal cord that promote scratching behavior. Contributes primarily to nonhistaminergic itch sensation. In one study, shown to act in the amygdala as part of an inhibitory network which inhibits memory specifically related to learned fear. In another study, shown to act on vasoactive intestinal peptide (VIP)-expressing cells in the auditory cortex, most likely via extrasynaptic diffusion from local and long-range sources, to mediate disinhibition of glutamatergic cells via VIP cell-specific GRPR signaling which leads to enhanced auditory fear memories. Contributes to the regulation of food intake. Inhibits voltage-gated sodium channels but enhances voltage-gated potassium channels in hippocampal neurons. Induces sighing by acting directly on the pre-Botzinger complex, a cluster of several thousand neurons in the ventrolateral medulla responsible for inspiration during respiratory activity. Functionally, induces an itch response through activation of receptors present on mast cells, triggering mast cell degranulation. The protein is Gastrin-releasing peptide (GRP) of Ovis aries (Sheep).